The chain runs to 180 residues: Cytidylate kinase (180 aa).

Residue 7–15 (GPPGSGTTT) participates in ATP binding.

It belongs to the cytidylate kinase family. Type 2 subfamily.

The protein localises to the cytoplasm. It carries out the reaction CMP + ATP = CDP + ADP. The enzyme catalyses dCMP + ATP = dCDP + ADP. The chain is Cytidylate kinase (cmk) from Archaeoglobus fulgidus (strain ATCC 49558 / DSM 4304 / JCM 9628 / NBRC 100126 / VC-16).